The sequence spans 1221 residues: Probable serine/threonine-protein kinase DDB_G0286465 (1221 aa).

Disordered stretches follow at residues 1–37, 104–133, and 173–263; these read MTLRLDTSLKRGASRNIPPIPTFSSVSNENLSSSPYT, FSPSTGRTKNNNNNNNNNINNNNYKKNDNQ, and ENNS…NNNE. 4 stretches are compositionally biased toward low complexity: residues 24–37, 112–127, 173–192, and 204–263; these read SSVSNENLSSSPYT, KNNNNNNNNNINNNNY, ENNSQNNNNNKYQINNNMQK, and NNNN…NNNE. The Protein kinase domain occupies 186 to 627; it reads INNNMQKTGG…PYKLLDHPFF (442 aa). An ATP-binding site is contributed by 192–200; it reads KTGGRNGSV. ATP is bound at residue K271. A compositionally biased stretch (low complexity) spans 324 to 344; sequence NVNNNNSNNNNNNSNNNITNS. The interval 324–346 is disordered; sequence NVNNNNSNNNNNNSNNNITNSRY. The active-site Proton acceptor is D448. 2 stretches are compositionally biased toward low complexity: residues 538–550 and 559–584; these read SPSSSSTTSTSTS and DSSSSASSSSSSSSSSSSSSSSSLPK. Disordered regions lie at residues 538–604, 712–782, 823–858, 959–1008, and 1105–1152; these read SPSS…PEKR, PNLS…KEKL, KFEKKQRQIQDSEKVNKNEEENQTKDDADNISPPLP, KENI…SYCN, and KKQE…QQEK. The segment covering 591-604 has biased composition (basic and acidic residues); the sequence is RSKDNQSKLDPEKR. The span at 725 to 738 shows a compositional bias: low complexity; that stretch reads KKQLQQYQQQQKQQ. The segment covering 746–756 has biased composition (acidic residues); sequence DDEEEKEEEEK. Basic and acidic residues-rich tracts occupy residues 757 to 769 and 823 to 850; these read EKEKEKEKEKEKE and KFEKKQRQIQDSEKVNKNEEENQTKDDA. Residues 959–993 are compositionally biased toward low complexity; sequence KENIINFHNNNNNNNNNNNNNNNNNNNNNNNNNNN.

The protein belongs to the protein kinase superfamily. Ser/Thr protein kinase family.

The enzyme catalyses L-seryl-[protein] + ATP = O-phospho-L-seryl-[protein] + ADP + H(+). It catalyses the reaction L-threonyl-[protein] + ATP = O-phospho-L-threonyl-[protein] + ADP + H(+). This is Probable serine/threonine-protein kinase DDB_G0286465 from Dictyostelium discoideum (Social amoeba).